The chain runs to 294 residues: MVPGEEPARELMAVLLTPRFRRLVSQNELPGPGLNGPSSRNRRDGFCRKRRTGCSGPFQATQLWDGIIHSLQAQVEIKRRRHHLQTYKDCFTGSDAVDVVLSHLMQNTCLSSNDISCLKGVHLCQVLMNHKVFEPVGMKKLFKKEKELEFEDSNISLYRFLGNKSSYDCCKRQKDAENEFNETLRPGYEMISNPLAQEIGEERIEELIHTINGNPALCPNITVQKPFLRLSKEDVWKEQTLLCLLQLIHLPFLDNILEPPVKTQNLQLNKEEDLVITNTCLDRELIPSLCLPEK.

The 92-residue stretch at 71–162 folds into the DEP domain; it reads LQAQVEIKRR…SNISLYRFLG (92 aa).

This is DEP domain-containing protein 4 (DEPDC4) from Homo sapiens (Human).